Here is a 273-residue protein sequence, read N- to C-terminus: MLSKFTAILLAVHIALFACALTQAEKRHKLTRPAFHPNAPYLAGKRIVGGFVIDISDAPYQISLQYNGKHHCGGSILNSKWILTAAHCIDLYSEVKPTVRVGSSEHAAGGTVLHLLRIVPHPGHSSGGNNYDIALLELECELTFNDNVQPVQLPEQDDPIDEGTMGIVSGWGMTMSAADLNAILRATNVPTVNQQECNQAYQSYGGVAEQMFCAGYKQGGTGTCRNDSGGPFVAEGKLIGVVSWSHECALAGYPGVYARVASVRDWIRETSGV.

The first 22 residues, 1-22 (MLSKFTAILLAVHIALFACALT), serve as a signal peptide directing secretion. Positions 23-46 (QAEKRHKLTRPAFHPNAPYLAGKR) are cleaved as a propeptide — activation peptide. Residues 47–272 (IVGGFVIDIS…VRDWIRETSG (226 aa)) enclose the Peptidase S1 domain. Cysteines 72 and 88 form a disulfide. Active-site charge relay system residues include histidine 87 and aspartate 132. Disulfide bonds link cysteine 197–cysteine 213 and cysteine 224–cysteine 248. Serine 228 serves as the catalytic Charge relay system.

This sequence belongs to the peptidase S1 family. Expressed in the midgut. Expression levels drop a few hours after blood feeding and pick up again 28 hours later.

Its subcellular location is the secreted. The enzyme catalyses Preferential cleavage: Arg-|-Xaa, Lys-|-Xaa.. In terms of biological role, constitutive trypsin that is expressed 2 days after emergence, coinciding with host seeking behavior of the female. The sequence is that of Trypsin-6 (TRYP6) from Anopheles gambiae (African malaria mosquito).